The chain runs to 68 residues: Large ribosomal subunit protein bL32 (68 aa).

The segment at 1–25 (MAVPQNKITKSRRGQRRSHDALVAG) is disordered.

The protein belongs to the bacterial ribosomal protein bL32 family.

This chain is Large ribosomal subunit protein bL32, found in Dinoroseobacter shibae (strain DSM 16493 / NCIMB 14021 / DFL 12).